A 337-amino-acid polypeptide reads, in one-letter code: RNA 3'-terminal phosphate cyclase (337 aa).

Residues Gln101 and 282–285 contribute to the ATP site; that span reads HMSD. Catalysis depends on His306, which acts as the Tele-AMP-histidine intermediate.

Belongs to the RNA 3'-terminal cyclase family. Type 1 subfamily.

It localises to the cytoplasm. The enzyme catalyses a 3'-end 3'-phospho-ribonucleotide-RNA + ATP = a 3'-end 2',3'-cyclophospho-ribonucleotide-RNA + AMP + diphosphate. Catalyzes the conversion of 3'-phosphate to a 2',3'-cyclic phosphodiester at the end of RNA. The mechanism of action of the enzyme occurs in 3 steps: (A) adenylation of the enzyme by ATP; (B) transfer of adenylate to an RNA-N3'P to produce RNA-N3'PP5'A; (C) and attack of the adjacent 2'-hydroxyl on the 3'-phosphorus in the diester linkage to produce the cyclic end product. The biological role of this enzyme is unknown but it is likely to function in some aspects of cellular RNA processing. The chain is RNA 3'-terminal phosphate cyclase (rtcA) from Saccharolobus solfataricus (strain ATCC 35092 / DSM 1617 / JCM 11322 / P2) (Sulfolobus solfataricus).